The chain runs to 264 residues: MAATGEALTPQGYIQHHLTNLHVGEGFWTWHIDSLFFSVGLGVLFLWIFRSVGKKATSGVPGKLQCFIEMIVEFVDNSVKESFHGRNALIAPLALTIFVWVFMMNFMDMLPVDWLPWLASLAGVPYLKVVPTTDVNITFSLAIGVFVLIIYYSIKVKGVSGFVKELTLQPFNHKAMIPVNLLLETVTLIAKPISLALRLFGNLYAGELIFILIALMYGTNLLLSSLGVTLQLGWLIFHILVITLQAFIFMMLTIVYLSMAHEDH.

6 helical membrane passes run 29 to 49 (TWHIDSLFFSVGLGVLFLWIF), 87 to 107 (NALIAPLALTIFVWVFMMNFM), 134 to 154 (DVNITFSLAIGVFVLIIYYSI), 177 to 197 (IPVNLLLETVTLIAKPISLAL), 208 to 228 (LIFILIALMYGTNLLLSSLGV), and 235 to 255 (LIFHILVITLQAFIFMMLTIV).

The protein belongs to the ATPase A chain family. As to quaternary structure, F-type ATPases have 2 components, CF(1) - the catalytic core - and CF(0) - the membrane proton channel. CF(1) has five subunits: alpha(3), beta(3), gamma(1), delta(1), epsilon(1). CF(0) has three main subunits: a(1), b(2) and c(9-12). The alpha and beta chains form an alternating ring which encloses part of the gamma chain. CF(1) is attached to CF(0) by a central stalk formed by the gamma and epsilon chains, while a peripheral stalk is formed by the delta and b chains.

Its subcellular location is the cell inner membrane. Key component of the proton channel; it plays a direct role in the translocation of protons across the membrane. The chain is ATP synthase subunit a from Shewanella sp. (strain MR-4).